We begin with the raw amino-acid sequence, 215 residues long: N-(5'-phosphoribosyl)anthranilate isomerase (215 aa).

The protein belongs to the TrpF family.

The catalysed reaction is N-(5-phospho-beta-D-ribosyl)anthranilate = 1-(2-carboxyphenylamino)-1-deoxy-D-ribulose 5-phosphate. It participates in amino-acid biosynthesis; L-tryptophan biosynthesis; L-tryptophan from chorismate: step 3/5. The polypeptide is N-(5'-phosphoribosyl)anthranilate isomerase (Chlorobium phaeobacteroides (strain DSM 266 / SMG 266 / 2430)).